Consider the following 280-residue polypeptide: Putative high affinity immunoglobulin gamma Fc receptor IB (280 aa).

The N-terminal stretch at 1–15 (MWFLTTLLLWVPVDG) is a signal peptide. At 16–198 (QVDTTKAVIT…LQLPTPVWFH (183 aa)) the chain is on the extracellular side. 2 consecutive Ig-like C2-type domains span residues 22-101 (AVIT…LEIH) and 95-184 (PIQL…ISQY). 2 disulfides stabilise this stretch: C43/C85 and C124/C168. Residues N59, N152, and N163 are each glycosylated (N-linked (GlcNAc...) asparagine). A helical transmembrane segment spans residues 199–219 (VLFYLAVGIMFLVNTVLWVTI). Residues 220–280 (RKELKRKKKW…VHRKEPQGAT (61 aa)) are Cytoplasmic-facing. Residues 258–280 (KCQEQKEEQLQEGVHRKEPQGAT) form a disordered region.

The protein belongs to the immunoglobulin superfamily. FCGR1 family.

The protein resides in the cell membrane. Functionally, may bind to the Fc region of immunoglobulins gamma with a low affinity compared to FCGR1A. May function in the humoral immune response. The polypeptide is Putative high affinity immunoglobulin gamma Fc receptor IB (Homo sapiens (Human)).